Here is a 130-residue protein sequence, read N- to C-terminus: Small ribosomal subunit protein uS9 (130 aa).

Belongs to the universal ribosomal protein uS9 family.

The chain is Small ribosomal subunit protein uS9 from Streptococcus equi subsp. equi (strain 4047).